A 264-amino-acid polypeptide reads, in one-letter code: 4-hydroxy-tetrahydrodipicolinate reductase (264 aa).

8 to 13 contributes to the NAD(+) binding site; that stretch reads GPRGNM. An NADP(+)-binding site is contributed by Lys-36. Residues 97–99 and 123–126 each bind NAD(+); these read GTT and APNF. Catalysis depends on His-153, which acts as the Proton donor/acceptor. Residue His-154 participates in (S)-2,3,4,5-tetrahydrodipicolinate binding. The Proton donor role is filled by Lys-157. Position 163 to 164 (163 to 164) interacts with (S)-2,3,4,5-tetrahydrodipicolinate; sequence GT.

This sequence belongs to the DapB family.

It localises to the cytoplasm. It catalyses the reaction (S)-2,3,4,5-tetrahydrodipicolinate + NAD(+) + H2O = (2S,4S)-4-hydroxy-2,3,4,5-tetrahydrodipicolinate + NADH + H(+). It carries out the reaction (S)-2,3,4,5-tetrahydrodipicolinate + NADP(+) + H2O = (2S,4S)-4-hydroxy-2,3,4,5-tetrahydrodipicolinate + NADPH + H(+). Its pathway is amino-acid biosynthesis; L-lysine biosynthesis via DAP pathway; (S)-tetrahydrodipicolinate from L-aspartate: step 4/4. Functionally, catalyzes the conversion of 4-hydroxy-tetrahydrodipicolinate (HTPA) to tetrahydrodipicolinate. This is 4-hydroxy-tetrahydrodipicolinate reductase from Shouchella clausii (strain KSM-K16) (Alkalihalobacillus clausii).